We begin with the raw amino-acid sequence, 320 residues long: Transaldolase (320 aa).

K126 acts as the Schiff-base intermediate with substrate in catalysis.

Belongs to the transaldolase family. Type 1 subfamily. Homodimer.

Its subcellular location is the cytoplasm. It catalyses the reaction D-sedoheptulose 7-phosphate + D-glyceraldehyde 3-phosphate = D-erythrose 4-phosphate + beta-D-fructose 6-phosphate. It participates in carbohydrate degradation; pentose phosphate pathway; D-glyceraldehyde 3-phosphate and beta-D-fructose 6-phosphate from D-ribose 5-phosphate and D-xylulose 5-phosphate (non-oxidative stage): step 2/3. Transaldolase is important for the balance of metabolites in the pentose-phosphate pathway. The protein is Transaldolase of Bordetella pertussis (strain Tohama I / ATCC BAA-589 / NCTC 13251).